The following is a 338-amino-acid chain: Histidinol-phosphate aminotransferase (338 aa).

N6-(pyridoxal phosphate)lysine is present on Lys-204.

The protein belongs to the class-II pyridoxal-phosphate-dependent aminotransferase family. Histidinol-phosphate aminotransferase subfamily. It depends on pyridoxal 5'-phosphate as a cofactor.

The catalysed reaction is L-histidinol phosphate + 2-oxoglutarate = 3-(imidazol-4-yl)-2-oxopropyl phosphate + L-glutamate. It participates in amino-acid biosynthesis; L-histidine biosynthesis; L-histidine from 5-phospho-alpha-D-ribose 1-diphosphate: step 7/9. This Pyrococcus furiosus (strain ATCC 43587 / DSM 3638 / JCM 8422 / Vc1) protein is Histidinol-phosphate aminotransferase.